Here is a 376-residue protein sequence, read N- to C-terminus: Erythronate-4-phosphate dehydrogenase (376 aa).

Positions 45 and 67 each coordinate substrate. NAD(+) is bound at residue aspartate 147. Arginine 209 is an active-site residue. Position 233 (aspartate 233) interacts with NAD(+). Glutamate 238 is a catalytic residue. Histidine 255 (proton donor) is an active-site residue. Glycine 258 serves as a coordination point for NAD(+). Tyrosine 259 provides a ligand contact to substrate.

It belongs to the D-isomer specific 2-hydroxyacid dehydrogenase family. PdxB subfamily. In terms of assembly, homodimer.

Its subcellular location is the cytoplasm. It catalyses the reaction 4-phospho-D-erythronate + NAD(+) = (R)-3-hydroxy-2-oxo-4-phosphooxybutanoate + NADH + H(+). Its pathway is cofactor biosynthesis; pyridoxine 5'-phosphate biosynthesis; pyridoxine 5'-phosphate from D-erythrose 4-phosphate: step 2/5. Functionally, catalyzes the oxidation of erythronate-4-phosphate to 3-hydroxy-2-oxo-4-phosphonooxybutanoate. The chain is Erythronate-4-phosphate dehydrogenase from Shewanella baltica (strain OS155 / ATCC BAA-1091).